The sequence spans 294 residues: 4-diphosphocytidyl-2-C-methyl-D-erythritol kinase (294 aa).

The active site involves K11. 93–103 provides a ligand contact to ATP; it reads PFGAGLGGGSS. Residue D135 is part of the active site.

This sequence belongs to the GHMP kinase family. IspE subfamily.

The enzyme catalyses 4-CDP-2-C-methyl-D-erythritol + ATP = 4-CDP-2-C-methyl-D-erythritol 2-phosphate + ADP + H(+). It functions in the pathway isoprenoid biosynthesis; isopentenyl diphosphate biosynthesis via DXP pathway; isopentenyl diphosphate from 1-deoxy-D-xylulose 5-phosphate: step 3/6. Catalyzes the phosphorylation of the position 2 hydroxy group of 4-diphosphocytidyl-2C-methyl-D-erythritol. The protein is 4-diphosphocytidyl-2-C-methyl-D-erythritol kinase of Chlorobium phaeobacteroides (strain DSM 266 / SMG 266 / 2430).